The primary structure comprises 279 residues: Prephenate dehydratase (279 aa).

One can recognise a Prephenate dehydratase domain in the interval 2-178 (KIAYLGPRGS…NSTRFWLLGK (177 aa)). Positions 194-270 (LALTLPDNLP…LGVKVRLLGN (77 aa)) constitute an ACT domain.

It catalyses the reaction prephenate + H(+) = 3-phenylpyruvate + CO2 + H2O. The protein operates within amino-acid biosynthesis; L-phenylalanine biosynthesis; phenylpyruvate from prephenate: step 1/1. This Lactococcus lactis subsp. lactis (strain IL1403) (Streptococcus lactis) protein is Prephenate dehydratase (pheA).